The sequence spans 419 residues: Epothilone C/D epoxidase (419 aa).

Residues alanine 180 and glycine 304 each coordinate substrate. Cysteine 365 serves as a coordination point for heme.

It belongs to the cytochrome P450 family. Requires heme as cofactor.

It catalyses the reaction epothilone C + 2 reduced [2Fe-2S]-[ferredoxin] + O2 + 2 H(+) = epothilone A + 2 oxidized [2Fe-2S]-[ferredoxin] + H2O. The enzyme catalyses epothilone D + 2 reduced [2Fe-2S]-[ferredoxin] + O2 + 2 H(+) = epothilone B + 2 oxidized [2Fe-2S]-[ferredoxin] + H2O. It participates in secondary metabolite biosynthesis; epothilone biosynthesis. Functionally, involved in the biosynthesis of epothilones, macrolactones which have a narrow anti-fungal spectrum and microtubule-stabilizing activity. Catalyzes the epoxidation of epothilones C and D to epothilones A and B, respectively. In Sorangium cellulosum (Polyangium cellulosum), this protein is Epothilone C/D epoxidase (cyp167A1).